A 393-amino-acid polypeptide reads, in one-letter code: Heparan sulfate glucosamine 3-O-sulfotransferase 3A1 (393 aa).

The Cytoplasmic portion of the chain corresponds to 1-24 (MAPSGPTGAQPSPAEPLSRSIFRK). Residues 25–43 (FLLMLCSLLTSLYVFYCLA) form a helical; Signal-anchor for type II membrane protein membrane-spanning segment. Residues 44–393 (ERCPPGSGPV…MTGRDFGWDG (350 aa)) lie on the Lumenal side of the membrane. Residues 85–121 (QRRRRGRSGPGDSSDQEEQSPGLAAAPGGSGAGSSVA) are disordered. 149 to 153 (KGGTR) is a 3'-phosphoadenylyl sulfate binding site. Substrate contacts are provided by residues 171–177 (EPHFFDR) and 202–205 (KTPS). 2 residues coordinate 3'-phosphoadenylyl sulfate: Arg230 and Ser238. An N-linked (GlcNAc...) asparagine glycan is attached at Asn260. 270–271 (WS) is a binding site for substrate. Asn331 is a glycosylation site (N-linked (GlcNAc...) asparagine). Cys338 and Cys350 form a disulfide bridge. 355 to 359 (KGRAH) is a binding site for 3'-phosphoadenylyl sulfate.

It belongs to the sulfotransferase 1 family.

The protein localises to the golgi apparatus membrane. It catalyses the reaction alpha-D-glucosaminyl-[heparan sulfate](n) + 3'-phosphoadenylyl sulfate = 3-sulfo-alpha-D-glucosaminyl-[heparan sulfate](n) + adenosine 3',5'-bisphosphate + H(+). In terms of biological role, sulfotransferase that utilizes 3'-phospho-5'-adenylyl sulfate (PAPS) to catalyze the transfer of a sulfo group to an N-unsubstituted glucosamine linked to a 2-O-sulfo iduronic acid unit on heparan sulfate. Catalyzes the O-sulfation of glucosamine in IdoUA2S-GlcNS and also in IdoUA2S-GlcNH2. Unlike HS3ST1/3-OST-1, does not convert non-anticoagulant heparan sulfate to anticoagulant heparan sulfate. The polypeptide is Heparan sulfate glucosamine 3-O-sulfotransferase 3A1 (Hs3st3a1) (Mus musculus (Mouse)).